The chain runs to 471 residues: Tyrosine--tRNA ligase (471 aa).

Tyrosine 41 contributes to the L-tyrosine binding site. Residues 46–55 carry the 'HIGH' region motif; that stretch reads PTAPSLHVGN. Positions 176 and 180 each coordinate L-tyrosine. The 'KMSKS' region signature appears at 236–240; it reads KFGKT. Lysine 239 provides a ligand contact to ATP. The S4 RNA-binding domain maps to 403-471; sequence DLITHILQKV…GKKHLAAVFY (69 aa).

It belongs to the class-I aminoacyl-tRNA synthetase family. TyrS type 1 subfamily. In terms of assembly, homodimer.

Its subcellular location is the cytoplasm. The enzyme catalyses tRNA(Tyr) + L-tyrosine + ATP = L-tyrosyl-tRNA(Tyr) + AMP + diphosphate + H(+). Catalyzes the attachment of tyrosine to tRNA(Tyr) in a two-step reaction: tyrosine is first activated by ATP to form Tyr-AMP and then transferred to the acceptor end of tRNA(Tyr). This Tropheryma whipplei (strain Twist) (Whipple's bacillus) protein is Tyrosine--tRNA ligase.